Here is a 416-residue protein sequence, read N- to C-terminus: MRSWLLLLVGLSSYFALSTSVNRAKNSGSDFDLESRASTTNVNSILSKRKLRAPGGDTNTLKDSGKARREKKVWKLFCRVFLQLDDEKKCMFETNQVSSHQPEPRPALSFMPGPKPAHSLVPESKPVRSLMTGNAPVRSIATKLKLVLPRITETVKNPSKSQVVMLWLHKVAEFSRSEHGVNTMSYRTLYEWLSPSFSDAKLAKFFVGLREDEALRETAEKMLAYMLIKSTSTEAVGRAWLKSGEHPSRLFESMNFKEADFKDTVFLGWLKYASLYEKHYFSQSELTDYRRQLFFYRMYDYIKPMYSYEKTQGFLEYKFEGLTSIPGMQDFGQNLADIARRERKISFYLDSEFTPEALFNYLKVSDENLLTNVFQWLRYCRRYTMAYKYVPFDELEFLEEKLGEISLWIYQVYGKL.

Positions 1–20 (MRSWLLLLVGLSSYFALSTS) are cleaved as a signal peptide. A RxLR-dEER motif is present at residues 49 to 88 (RKLRAPGGDTNTLKDSGKARREKKVWKLFCRVFLQLDDEK).

This sequence belongs to the RxLR effector family.

It localises to the secreted. The protein localises to the host cytoplasm. Its subcellular location is the host nucleus. Functionally, effector that partially suppresses the tobacco programmed cell death induced by cell death-inducing proteins. This is Secreted RxLR effector protein 25 from Plasmopara viticola (Downy mildew of grapevine).